The primary structure comprises 709 residues: MLNPIVRKFQYGQHTVTIETGMMARQATAAVMVNMDDTAVFVTVVGQKKVKAGQDFFPLTVNYQERTYAAGRIPGSFFRREGRPGEGETLVARLIDRPLRPLFPEGFLNEVRIVATVVSVNPQINPDIVAMIGASAALALSGIPFNGPIGAARVGYINDQYVLNPTSDELKNSRLDLVVSGTAGAVLMVESEADLLTEEQMLGAVVFGHDQQQVVIDNINALAAEAGKEKWDWVPEPVNQALHDRVAELAESRLGDAYRITEKQERYAQVDAIKDEVTAALLEQDETLEEAEIHEILGSLEKNVVRSRVLSGEPRIDGREKDMVRALDVRTGVLPRTHGSALFTRGETQALVTATLGTERDAQIIDELMGERTDRFLLHYNFPPYSVGETGMMGSPKRREIGHGRLAKRGVLAVMPKANEFPYTVRVVSEITESNGSSSMASVCGASLALMDAGVPIKAAVAGIAMGLVKEGDNFVVLSDILGDEDHLGDMDFKVAGSCEGISALQMDIKIEGITREIMQVALNQAKGARLHILSVMEQAITTPRDDISQFAPRIHTIKINPDKIKDVIGKGGSVIRALTEETGTTIEIEDDGTVKIAATDGEKAKHAISRIEEITAEIEVGRIYAGKVTRIVDFGAFVAIGGGKEGLVHISQIADKRVEKVADYLQVGQETSVKVLEIDRQGRVRLSIKEATAGTAVEEAPPAPQSAE.

Positions 486 and 492 each coordinate Mg(2+). A KH domain is found at 553-612 (PRIHTIKINPDKIKDVIGKGGSVIRALTEETGTTIEIEDDGTVKIAATDGEKAKHAISRI). An S1 motif domain is found at 622 to 690 (GRIYAGKVTR…RQGRVRLSIK (69 aa)).

This sequence belongs to the polyribonucleotide nucleotidyltransferase family. Component of the RNA degradosome, which is a multiprotein complex involved in RNA processing and mRNA degradation. Mg(2+) is required as a cofactor.

It is found in the cytoplasm. It carries out the reaction RNA(n+1) + phosphate = RNA(n) + a ribonucleoside 5'-diphosphate. Its function is as follows. Involved in mRNA degradation. Catalyzes the phosphorolysis of single-stranded polyribonucleotides processively in the 3'- to 5'-direction. The protein is Polyribonucleotide nucleotidyltransferase of Photorhabdus luminescens (Xenorhabdus luminescens).